The chain runs to 162 residues: Interleukin-15 (162 aa).

An N-terminal signal peptide occupies residues 1-29 (MRILKPYLRSTSIQCYLCLLLNSHFLTEA). Positions 30–48 (GIHVFILGCISAGLPKTEA) are excised as a propeptide. 2 disulfides stabilise this stretch: Cys-83-Cys-133 and Cys-90-Cys-136. 3 N-linked (GlcNAc...) asparagine glycosylation sites follow: Asn-113, Asn-121, and Asn-127.

This sequence belongs to the IL-15/IL-21 family.

It is found in the secreted. Cytokine that plays a major role in the development of inflammatory and protective immune responses to microbial invaders and parasites by modulating immune cells of both the innate and adaptive immune systems. Stimulates the proliferation of natural killer cells, T-cells and B-cells and promotes the secretion of several cytokines. In monocytes, induces the production of IL8 and monocyte chemotactic protein 1/CCL2, two chemokines that attract neutrophils and monocytes respectively to sites of infection. Unlike most cytokines, which are secreted in soluble form, IL15 is expressed in association with its high affinity IL15RA on the surface of IL15-producing cells and delivers signals to target cells that express IL2RB and IL2RG receptor subunits. Binding to its receptor triggers the phosphorylation of JAK1 and JAK3 and the recruitment and subsequent phosphorylation of signal transducer and activator of transcription-3/STAT3 and STAT5. In mast cells, induces the rapid tyrosine phosphorylation of STAT6 and thereby controls mast cell survival and release of cytokines such as IL4. The protein is Interleukin-15 (IL15) of Bubalus bubalis (Domestic water buffalo).